The following is a 696-amino-acid chain: UvrABC system protein B (696 aa).

The region spanning 46-433 (EGVEDGLSFQ…SGQTAEQVVR (388 aa)) is the Helicase ATP-binding domain. 59–66 (GVTGSGKT) is an ATP binding site. The Beta-hairpin signature appears at 112-135 (YYDYYQPEAYVPQRDLFIEKDSSI). The Helicase C-terminal domain occupies 450-616 (QVDDVLSEIT…GVVKRIKDII (167 aa)). A UVR domain is found at 647 to 682 (AKEIKRLEKQMADYAKNLEFEKAAQTRDQLALLRER).

Belongs to the UvrB family. Forms a heterotetramer with UvrA during the search for lesions. Interacts with UvrC in an incision complex.

The protein localises to the cytoplasm. Its function is as follows. The UvrABC repair system catalyzes the recognition and processing of DNA lesions. A damage recognition complex composed of 2 UvrA and 2 UvrB subunits scans DNA for abnormalities. Upon binding of the UvrA(2)B(2) complex to a putative damaged site, the DNA wraps around one UvrB monomer. DNA wrap is dependent on ATP binding by UvrB and probably causes local melting of the DNA helix, facilitating insertion of UvrB beta-hairpin between the DNA strands. Then UvrB probes one DNA strand for the presence of a lesion. If a lesion is found the UvrA subunits dissociate and the UvrB-DNA preincision complex is formed. This complex is subsequently bound by UvrC and the second UvrB is released. If no lesion is found, the DNA wraps around the other UvrB subunit that will check the other stand for damage. This is UvrABC system protein B from Burkholderia mallei (strain ATCC 23344).